The following is a 717-amino-acid chain: ATP-dependent zinc metalloprotease FtsH (717 aa).

Residues 1-7 (MFKDKKM) are Cytoplasmic-facing. A helical membrane pass occupies residues 8-28 (LKYIVIYSIIAFGILLTFNMV). At 29 to 109 (KDEMLYEKVD…VEFNVTKPEN (81 aa)) the chain is on the extracellular side. Residues 110–130 (YQLLGLLMSWVFPLILIFFVG) traverse the membrane as a helical segment. Over 131 to 717 (RMMFSKMNNK…SSTNNKVDGE (587 aa)) the chain is Cytoplasmic. 206-213 (GPPGTGKT) lines the ATP pocket. Residue histidine 427 coordinates Zn(2+). Residue glutamate 428 is part of the active site. Residues histidine 431 and aspartate 504 each contribute to the Zn(2+) site. The tract at residues 670 to 717 (KLARANNEANNDALDSSKENEEVKSNVNDGATEEKKDDSSTNNKVDGE) is disordered. Composition is skewed to basic and acidic residues over residues 684 to 693 (DSSKENEEVK) and 701 to 717 (TEEK…VDGE).

The protein in the central section; belongs to the AAA ATPase family. In the C-terminal section; belongs to the peptidase M41 family. As to quaternary structure, homohexamer. The cofactor is Zn(2+).

It is found in the cell membrane. Its function is as follows. Acts as a processive, ATP-dependent zinc metallopeptidase for both cytoplasmic and membrane proteins. Plays a role in the quality control of integral membrane proteins. This Clostridium perfringens (strain ATCC 13124 / DSM 756 / JCM 1290 / NCIMB 6125 / NCTC 8237 / Type A) protein is ATP-dependent zinc metalloprotease FtsH.